A 194-amino-acid chain; its full sequence is Calcium channel flower (194 aa).

Residues 1 to 34 lie on the Cytoplasmic side of the membrane; that stretch reads MSFAEKITGLLARPNQQDPIGPEQPWYLKYGSRL. The helical transmembrane segment at 35 to 55 threads the bilayer; sequence LGIVAAFFAILFGLWNVFSII. At 56-65 the chain is on the extracellular side; the sequence is TLSVSCLVAG. The chain crosses the membrane as a helical span at residues 66 to 88; the sequence is ILQMVAGFVVMLLEAPCCFVCFG. Residues 89 to 106 lie on the Cytoplasmic side of the membrane; it reads QVNEIAEKVESKPLYFRA. A helical membrane pass occupies residues 107-127; that stretch reads GLYIAMAIPPIILCFGLASLF. The Extracellular segment spans residues 128–194; that stretch reads GSGLIFGTGV…TGAVGTDSNV (67 aa). 2 important for promoting apoptosis regions span residues 135 to 157 and 135 to 192; these read TGVV…RAAA and TGVV…GTDS.

The protein belongs to the calcium channel flower family. As to quaternary structure, associates with the dally/ magu complex. Homomultimer. Associates with the dally/ magu complex. In terms of tissue distribution, detected in the imaginal wing disk (at protein level). As to expression, detected throughout the adult brain, including the optic lobe but, at much lower levels of expression than isoform Lose-A. Detected in the optic lobe (at protein level). Detected throughout the adult brain, including the optic lobe. Expressed in damaged and undamaged optic lobe neurons. In terms of tissue distribution, expressed in optic lobe neurons, with higher levels of expression in suboptimal neurons. Specifically expressed in injury-damaged optic lobe neurons.

It is found in the cell membrane. The protein resides in the cytoplasmic vesicle. The protein localises to the secretory vesicle. Its subcellular location is the synaptic vesicle membrane. It localises to the presynaptic cell membrane. It is found in the endosome. The protein resides in the synaptic vesicle. Channel activity is inhibited by La(3+), which reduces Ca(2+) influx and thus inhibits it's function in promoting activity-dependent bulk endocytosis (ADBE) in response to high stimuli. In terms of biological role, transmembrane protein which mediates synaptic endocytosis, fitness-based cell culling, neuronal culling, morphogen gradient scaling, and calcium transport. Regulates synaptic endocytosis and hence couples exo- with endocytosis. Controls two major modes of synaptic vesicle (SV) endocytosis in the synaptic boutons of neuromuscular junctions (NMJs); Ca(2+) channel-independent Clathrin-mediated endocytosis (CME) in response to mild stimulation, and Ca(2+) channel-dependent activity-dependent bulk endocytosis (ADBE) in response to strong stimulation. Functions in ADBE and subsequent SV reformation from bulk endosomes by initiating Ca(2+) channel-dependent phosphatidylinositol 4,5-bisphosphate (PtdIns(4,5)P2) compartmentalization in synaptic boutons. There it acts at the periactive zone to provide the low Ca(2+) levels required to initiate Calcineurin activation and upregulate PtdIns(4,5)P2. Conversely PtdIns(4,5)P2 enhances fwe Ca(2+) channel-activity, establishing a positive feedback loop that induces PtdIns(4,5)P2 microdomain at the periactive zone. These microdomains trigger bulk membrane invagination (i.e. ADBE) by triggering actin polymerization while also promoting localization of fwe to bulk endosomes, thereby removing the ADBE trigger to reduce endocytosis and prevent excess membrane uptake. PtdIns(4,5)P2 then promotes SV reformation from the bulk endosomes, to coordinate ADBE and subsequent SV reformation. Different combinations of the flower isoforms at the cell membrane are also required for the identification and elimination of suboptimal or supernumerary cells during development, regeneration, and adulthood. Required for the recognition and elimination of unfit cells in the developing wing during cell competition. Also required for efficient identification and elimination of injured, damaged and/or dysfunctional neurons during regeneration of the adult brain. In the developing pupal retina, mediates the elimination of unwanted postmitotic neurons, including supernumerary photoreceptor neurons that form at the periphery of the retina and are contained within incomplete ommatidia units. Downstream of the flower fitness fingerprints, cells identified as unwanted or unfit are eliminated via apoptosis through the expression of ahuizotl (azot). However, the cells marked for elimination by the flower isoforms only undergo apoptosis if additional thresholds are met; (1) their neighboring fit/healthy cells express different levels of the fwe isoforms, and (2) the levels of the protective signal SPARC expressed by the loser or unwanted cells are unable to inhibit caspase activation. These additional thresholds for flower-mediated apoptosis, allows useful cells to recover from transient and limited stress before they are unnecessarily eliminated. Functions with dally and magu in a mechanism of scaling, which utilises apoptosis to ensure that the dpp morphogen gradient, which mediates organ growth, remains proportional to the size of the growing wing. In this mechanism, fwe represses dally- and Magu-dependent activity in expanding the gradient, and dally/Magu inhibits fwe-dependent apoptosis to keep cell death rate low. When the levels of these different proteins are optimally regulated the gradient correctly scales with organ growth but when this fails, fwe-mediated apoptosis is activated to trim the developing tissue to match the correct size of the gradient. Functionally, functions with the other flower isoforms to produce tissue-specific fitness fingerprints that identify unfit or fit cells during cell selection processes in order to maintain tissue health. In the wing imaginal disk, this isoform is highly expressed in healthy/normal cells but is down-regulated in cells with decreased fitness. During cell competition, if levels of this isoform in unfit cells is lower than in the surrounding neighboring cells, the suboptimal cells are recognized as 'loser' cells, and undergo elimination via apoptosis to be replaced by the surrounding healthy 'winner' cell population. Its function is as follows. Functions with the other flower isoforms to produce tissue-specific fitness fingerprints that identify unfit or fit cells during cell selection processes in order to maintain tissue health. In the wing imaginal disk, this isoform displays low levels of expression in healthy/normal cells but is up-regulated in cells with decreased fitness. During cell competition, if levels of this isoform in unfit cells is higher than in the surrounding neighboring cells, the suboptimal cells are recognized as 'loser' cells, and undergo elimination via apoptosis to be replaced by the surrounding healthy 'winner' cell population. Functions with the other flower isoforms to produce tissue-specific fitness fingerprints that identify unfit cells for cell selection processes during development, regeneration, and to maintain tissue health. During cell competition in certain tissues, marks suboptimal or damaged cells as 'loser' cells. In cells of the wing imaginal disk and damaged or dysfunctional neurons in the adult optic lobe, this isoform displays low to no expression in healthy/normal cells but is up-regulated in cells with decreased fitness or damage-affected neurons. During cell competition, if levels of this isoform in unfit cells is higher than in the surrounding neighboring cells, the suboptimal cells are recognized as 'loser' cells, and undergo elimination via apoptosis to be replaced by the surrounding healthy/undamaged 'winner' cell population. In the developing pupal retina, also required for the recognition and elimination of postmitotic neurons, including supernumerary photoreceptor neurons that form at the periphery of the retina and are contained within incomplete ommatidia units. Activity at the peripheral retina is induced by the wg signaling pathway but, once activated, it promotes apoptosis of supernumerary photoreceptor neurons independently of wg signaling and snail function. In Drosophila melanogaster (Fruit fly), this protein is Calcium channel flower (fwe).